The chain runs to 468 residues: Cell division protein FtsA (468 aa).

The disordered stretch occupies residues 416–468 (NKKDTHENEVESSDEEIYQSEDNHQEHKQNHEHVQDKDKEESKFKKLMKSLFE). Residues 425 to 434 (VESSDEEIYQ) are compositionally biased toward acidic residues. Positions 436–459 (EDNHQEHKQNHEHVQDKDKEESKF) are enriched in basic and acidic residues.

Belongs to the FtsA/MreB family. As to quaternary structure, self-interacts. Interacts with FtsZ.

The protein localises to the cell membrane. Its function is as follows. Cell division protein that is involved in the assembly of the Z ring. May serve as a membrane anchor for the Z ring. The sequence is that of Cell division protein FtsA from Staphylococcus aureus (strain MRSA252).